The following is a 389-amino-acid chain: Nicotinamide-nucleotide adenylyltransferase (389 aa).

Residues 380 to 383 carry the Nuclear localization signal motif; the sequence is KKQK.

Belongs to the eukaryotic NMN adenylyltransferase family. Abundantly expressed in neuronal and muscle cells. Present at relatively low levels at the neuromuscular junction. Expressed in the eye; present in photoreceptor cells and various neurons in the lamina cortex and medulla cortex and at low levels in the lamina.

It is found in the nucleus. The protein resides in the cytoplasm. Its subcellular location is the presynaptic active zone. The enzyme catalyses beta-nicotinamide D-ribonucleotide + ATP + H(+) = diphosphate + NAD(+). It catalyses the reaction nicotinate beta-D-ribonucleotide + ATP + H(+) = deamido-NAD(+) + diphosphate. The protein operates within cofactor biosynthesis; NAD(+) biosynthesis; NAD(+) from nicotinamide D-ribonucleotide: step 1/1. It functions in the pathway cofactor biosynthesis; NAD(+) biosynthesis; deamido-NAD(+) from nicotinate D-ribonucleotide: step 1/1. Catalyzes the formation of NAD(+) from nicotinamide mononucleotide (NMN) and ATP. Essential for viability. Stress-response chaperone protein that prevents toxic aggregation of proteins and promotes proteasome-mediated degradation of misfolded proteins; this is independent of its NAD(+) synthesis activity. Neuroprotective in response to toxic protein aggregation, for example by overexpressed Atx-1/ataxin-1. Required for maintenance and integrity of mature neurons, protecting them from neuronal activity-induced neurodegeneration. Required for the maintenance of axonal and dendritic integrity in both central and peripheral neurons. Chaperone function and neuroprotective roles are largely independent of NAD(+) synthesis activity. Its function is as follows. Catalyzes the formation of NAD(+) from nicotinamide mononucleotide (NMN) and ATP. Has, or stimulates, chaperone holdase activity but not refoldase activity. Does not have neuroprotective properties and may stimulate apoptosis and neurodegeneration in response to toxic protein aggregates. Functionally, catalyzes the formation of NAD(+) from nicotinamide mononucleotide (NMN) and ATP. Has, or stimulates, chaperone holdase and refoldase activity. Neuroprotective and reduces the toxic load of protein aggregates, preventing apoptosis and neurodegeneration. Promotes clearance of nuclear misfolded protein aggregates. In Drosophila melanogaster (Fruit fly), this protein is Nicotinamide-nucleotide adenylyltransferase.